Here is a 217-residue protein sequence, read N- to C-terminus: MQRFTDFYASMHGGASVTPTGLGYIPMVIEQSGRGERAYDIYSRLLRERLIFLVGPVNDNTANLIVAQLLFLESENPDKDISLYINSPGGSVYAGMAIYDTMQFVKPDVSTLCTGLAASMGAFLLAAGKKGKRFTLPNSRIMIHQPSGGAQGQASDIQIQAREILDLRERLNRILAENTGQPVERIAVDTERDNFMSAEDAVSYGLVDKVLASRSEG.

Residue Ser119 is the Nucleophile of the active site. The active site involves His144.

It belongs to the peptidase S14 family. As to quaternary structure, fourteen ClpP subunits assemble into 2 heptameric rings which stack back to back to give a disk-like structure with a central cavity, resembling the structure of eukaryotic proteasomes.

The protein resides in the cytoplasm. The catalysed reaction is Hydrolysis of proteins to small peptides in the presence of ATP and magnesium. alpha-casein is the usual test substrate. In the absence of ATP, only oligopeptides shorter than five residues are hydrolyzed (such as succinyl-Leu-Tyr-|-NHMec, and Leu-Tyr-Leu-|-Tyr-Trp, in which cleavage of the -Tyr-|-Leu- and -Tyr-|-Trp bonds also occurs).. Its function is as follows. Cleaves peptides in various proteins in a process that requires ATP hydrolysis. Has a chymotrypsin-like activity. Plays a major role in the degradation of misfolded proteins. This is ATP-dependent Clp protease proteolytic subunit from Bordetella petrii (strain ATCC BAA-461 / DSM 12804 / CCUG 43448).